A 1167-amino-acid polypeptide reads, in one-letter code: Kinesin-like protein KIN-14M (1167 aa).

Residues 93–130 (PRKENDPGTQNSEGRRKIPKNPAMSEPSSPLSQTTLSS) are disordered. Positions 117–130 (SEPSSPLSQTTLSS) are enriched in low complexity. 3 coiled-coil regions span residues 271–333 (VHQM…KEEM), 366–398 (AKYRNEIIKLMKEKEDSNDTIMKLNIELEAMKS), and 432–489 (KQEL…ESRS). Positions 572–900 (NIRVHCRIRP…LKFADRVSGV (329 aa)) constitute a Kinesin motor domain. Residue 656–663 (GQTGSGKT) coordinates ATP. Positions 907–944 (ANKEGKDIKEFKEQLSLLKDKIAKKDEEISRLQLQSHN) form a coiled coil. Disordered regions lie at residues 955 to 974 (SLLKHSSSSPGISSLGSKIQ) and 1083 to 1167 (PDQD…KRWT). Residues 958 to 972 (KHSSSSPGISSLGSK) show a composition bias toward low complexity. Polar residues-rich tracts occupy residues 1113-1124 (ASRTTTPKTPQS) and 1151-1167 (TQATSSSRNSSTQKRWT).

It belongs to the TRAFAC class myosin-kinesin ATPase superfamily. Kinesin family. KIN-14 subfamily.

This chain is Kinesin-like protein KIN-14M, found in Oryza sativa subsp. japonica (Rice).